We begin with the raw amino-acid sequence, 411 residues long: Elongation factor 1-gamma (411 aa).

The GST N-terminal domain occupies 3 to 84 (LTLWSGVNPE…HIARLDRSGG (82 aa)). The GST C-terminal domain occupies 90 to 216 (TPLEGSQVDM…QGATFGAREG (127 aa)). A disordered region spans residues 212–265 (GAREGGAKGQGRGCARPGREEAERAAAAADGAEEEDEAPREKKKPNPLDELPPS). The segment covering 214 to 223 (REGGAKGQGR) has biased composition (gly residues). Positions 255 to 411 (KPNPLDELPP…RPVLEGRVFK (157 aa)) constitute an EF-1-gamma C-terminal domain.

In terms of assembly, EF-1 is composed of four subunits: alpha, beta, delta, and gamma.

In terms of biological role, probably plays a role in anchoring the complex to other cellular components. This chain is Elongation factor 1-gamma, found in Trypanosoma cruzi.